Consider the following 500-residue polypeptide: Protein C13 (500 aa).

Residues 27 to 89 form the BTB domain; it reads EEIVFIMTVG…IETGIVTIDL (63 aa). 4 Kelch repeats span residues 301–348, 349–395, 397–440, and 441–490; these read ILYL…IFKN, RIYV…GTDN, LYVV…YHHG, and YIYM…IIED.

It belongs to the poxviruses Kelch family.

This Swinepox virus (strain Kasza) (SWPV) protein is Protein C13.